Reading from the N-terminus, the 605-residue chain is Elongation factor 4 (605 aa).

Positions 4 to 186 (SSVRNFCIIA…AIVNKVPAPK (183 aa)) constitute a tr-type G domain. Residues 16–21 (DHGKST) and 133–136 (NKID) each bind GTP.

The protein belongs to the TRAFAC class translation factor GTPase superfamily. Classic translation factor GTPase family. LepA subfamily.

It localises to the cell membrane. It catalyses the reaction GTP + H2O = GDP + phosphate + H(+). Required for accurate and efficient protein synthesis under certain stress conditions. May act as a fidelity factor of the translation reaction, by catalyzing a one-codon backward translocation of tRNAs on improperly translocated ribosomes. Back-translocation proceeds from a post-translocation (POST) complex to a pre-translocation (PRE) complex, thus giving elongation factor G a second chance to translocate the tRNAs correctly. Binds to ribosomes in a GTP-dependent manner. This chain is Elongation factor 4, found in Dehalococcoides mccartyi (strain ATCC BAA-2100 / JCM 16839 / KCTC 5957 / BAV1).